The primary structure comprises 183 residues: Oligoribonuclease (183 aa).

Residues 9-172 (LIWIDLEMTG…DDIRDSISEL (164 aa)) form the Exonuclease domain. Tyr-130 is a catalytic residue.

This sequence belongs to the oligoribonuclease family.

The protein resides in the cytoplasm. In terms of biological role, 3'-to-5' exoribonuclease specific for small oligoribonucleotides. The protein is Oligoribonuclease of Acinetobacter baylyi (strain ATCC 33305 / BD413 / ADP1).